A 256-amino-acid chain; its full sequence is Nuclear shuttle protein (256 aa).

The Bipartite nuclear localization signal motif lies at 21-42; the sequence is HSTGKRSRNVSRIDFKRRSSKY. Positions 81–96 match the Nuclear localization signal motif; the sequence is SLGKTEPSRSRSYIKL. Residues 150–187 are interaction with Arabidopsis thaliana NSI protein; the sequence is ELFGARIHSHGNLAVSSALKDRFYIRHVFKRVISVEKD.

Belongs to the begomovirus nuclear shuttle protein family. As to quaternary structure, binds to single-stranded and double-stranded viral DNA. Interacts with the host nuclear shuttle interacting (NSI) protein. This interaction may allow NSP to recruit NSI monomers to the viral genome and thus regulate nuclear export of viral genome by NSP.

The protein localises to the host nucleus. Its subcellular location is the host cytoplasm. It localises to the host cell membrane. Binds to the genomic viral ssDNA, shuttles it into and out of the cell nucleus. Begomoviruses use 2 proteins to transport their DNA from cell to cell. The nuclear shuttle protein (NSP) shuttles it between nucleus and cytoplasm and the movement protein (MP) probably transports the DNA-NSP complex to the cell periphery and facilitates movement across the cell wall. The chain is Nuclear shuttle protein from Solanum lycopersicum (Tomato).